Here is a 259-residue protein sequence, read N- to C-terminus: Putative zinc metalloprotease Rip2 (259 aa).

The next 2 membrane-spanning stretches (helical) occupy residues 14–34 (PIFLGLLGLTAVGGALAWLAG) and 39–59 (PLAYAGVFVMVIAGWLVSLCL). Residue histidine 60 participates in Zn(2+) binding. Glutamate 61 is a catalytic residue. Histidine 64 contacts Zn(2+). The next 4 membrane-spanning stretches (helical) occupy residues 97–117 (GLPMLFIALGGIGLPGAAVYV), 128–148 (TLVSLAGPTVNLALAMLLLAA), 156–176 (IHAVLWAGVAFLAFLQLTALV), and 211–231 (LVFLLVLFLAPTLNGWFFGVV).

This sequence belongs to the peptidase M50B family. Requires Zn(2+) as cofactor.

It is found in the cell membrane. This Mycobacterium tuberculosis (strain ATCC 25618 / H37Rv) protein is Putative zinc metalloprotease Rip2 (rip2).